Consider the following 501-residue polypeptide: ATP synthase subunit alpha, chloroplastic (501 aa).

170–177 (GDRQTGKT) is a binding site for ATP.

Belongs to the ATPase alpha/beta chains family. As to quaternary structure, F-type ATPases have 2 components, CF(1) - the catalytic core - and CF(0) - the membrane proton channel. CF(1) has five subunits: alpha(3), beta(3), gamma(1), delta(1), epsilon(1). CF(0) has four main subunits: a, b, b' and c.

Its subcellular location is the plastid. The protein localises to the chloroplast thylakoid membrane. It catalyses the reaction ATP + H2O + 4 H(+)(in) = ADP + phosphate + 5 H(+)(out). Functionally, produces ATP from ADP in the presence of a proton gradient across the membrane. The alpha chain is a regulatory subunit. This Nephroselmis olivacea (Green alga) protein is ATP synthase subunit alpha, chloroplastic.